The sequence spans 274 residues: MSHPYASPFAEVIGDPIAQSKSPLIHGFWLDALGMEGDYRRAHVKADALAAYIAERRADPGWRGCNVTMPHKAAVMDLVDDPGDIRGTIGAMNTIVRQPDGSLIGTNTDAAGFYSPLAELDLEGAPIAVVGAGGAARAVLFALARAKVGKVAILNRSPLKAMGLLATFGLKGDVVALDAALPPVRLLVNASSLGMAGQPPLDLDLSPLPDDAIVYDLVYSPLRTGLLKAAEARGLDTVDGLDMLIGQAALAFELFFGAPPPEGRDDELRALLVA.

Shikimate is bound by residues 20–22 (SKS) and Thr68. Lys72 functions as the Proton acceptor in the catalytic mechanism. Residue Asp84 participates in NADP(+) binding. Shikimate-binding residues include Asn93 and Asp109. Residues 131–135 (GAGGA) and Leu217 contribute to the NADP(+) site. Tyr219 lines the shikimate pocket. Residue Gly240 coordinates NADP(+).

The protein belongs to the shikimate dehydrogenase family. In terms of assembly, homodimer.

It catalyses the reaction shikimate + NADP(+) = 3-dehydroshikimate + NADPH + H(+). The protein operates within metabolic intermediate biosynthesis; chorismate biosynthesis; chorismate from D-erythrose 4-phosphate and phosphoenolpyruvate: step 4/7. Its function is as follows. Involved in the biosynthesis of the chorismate, which leads to the biosynthesis of aromatic amino acids. Catalyzes the reversible NADPH linked reduction of 3-dehydroshikimate (DHSA) to yield shikimate (SA). This chain is Shikimate dehydrogenase (NADP(+)), found in Sphingopyxis alaskensis (strain DSM 13593 / LMG 18877 / RB2256) (Sphingomonas alaskensis).